Consider the following 224-residue polypeptide: GrpE protein homolog 2, mitochondrial (224 aa).

The transit peptide at 1 to 31 (MAARLLWAVRRRMQPLAAHAASEGRGWLHPF) directs the protein to the mitochondrion. Lysine 141 is subject to N6-acetyllysine.

Belongs to the GrpE family. In terms of assembly, probable component of the PAM complex at least composed of a mitochondrial HSP70 protein, GRPEL1 or GRPEL2, TIMM44, TIMM16/PAM16 and TIMM14/DNAJC19.

It is found in the mitochondrion matrix. Functionally, essential component of the PAM complex, a complex required for the translocation of transit peptide-containing proteins from the inner membrane into the mitochondrial matrix in an ATP-dependent manner. Seems to control the nucleotide-dependent binding of mitochondrial HSP70 to substrate proteins. Stimulates ATPase activity of mt-HSP70. May also serve to modulate the interconversion of oligomeric (inactive) and monomeric (active) forms of mt-HSP70. This chain is GrpE protein homolog 2, mitochondrial (GRPEL2), found in Bos taurus (Bovine).